The sequence spans 474 residues: Glutathione synthetase (474 aa).

Ala2 carries the N-acetylalanine modification. A substrate-binding site is contributed by Arg125. ATP is bound at residue Glu144. Mg(2+)-binding residues include Glu144 and Asn146. Substrate contacts are provided by residues 148–151, 214–216, Gln220, and 267–270; these read ISAS, ERN, and RDGY. ATP contacts are provided by residues Lys305, 364–373, Tyr375, and 398–401; these read KPQREGGGNN and MEKI. Mg(2+) is bound at residue Glu368. Ser415 is subject to Phosphoserine. ATP is bound at residue Glu425. A substrate-binding site is contributed by Arg450. Residues Lys452 and Asp458 each coordinate ATP. Residue 461–462 participates in substrate binding; sequence VA.

The protein belongs to the eukaryotic GSH synthase family. Homodimer. Requires Mg(2+) as cofactor.

It carries out the reaction gamma-L-glutamyl-L-cysteine + glycine + ATP = glutathione + ADP + phosphate + H(+). The enzyme catalyses gamma-L-glutamyl-(2S)-2-aminobutanoate + glycine + ATP = ophthalmate + ADP + phosphate + H(+). It functions in the pathway sulfur metabolism; glutathione biosynthesis; glutathione from L-cysteine and L-glutamate: step 2/2. Its function is as follows. Catalyzes the production of glutathione from gamma-glutamylcysteine and glycine in an ATP-dependent manner. Glutathione (gamma-glutamylcysteinylglycine, GSH) is the most abundant intracellular thiol in living aerobic cells and is required for numerous processes including the protection of cells against oxidative damage, amino acid transport, the detoxification of foreign compounds, the maintenance of protein sulfhydryl groups in a reduced state and acts as a cofactor for a number of enzymes. Participates in ophthalmate biosynthesis in hepatocytes. The sequence is that of Glutathione synthetase from Rattus norvegicus (Rat).